Here is a 268-residue protein sequence, read N- to C-terminus: Shikimate kinase (268 aa).

ATP is bound at residue 70–80; it reads PSGYGLKSSSA.

The protein belongs to the GHMP kinase family. Archaeal shikimate kinase subfamily.

The protein resides in the cytoplasm. It carries out the reaction shikimate + ATP = 3-phosphoshikimate + ADP + H(+). It participates in metabolic intermediate biosynthesis; chorismate biosynthesis; chorismate from D-erythrose 4-phosphate and phosphoenolpyruvate: step 5/7. This chain is Shikimate kinase (aroK), found in Thermoplasma acidophilum (strain ATCC 25905 / DSM 1728 / JCM 9062 / NBRC 15155 / AMRC-C165).